We begin with the raw amino-acid sequence, 190 residues long: MLPDIGGTELLVIAAVALIVVGPKDLPVLLRKLGQFIGKIRGMANEFRASFDEMARQSELDELRKEVQAMRDGQYTAPMRDAAAQAGDASHVDQVFADIDASLNSGAVKVSPFEAYQAPALEAPEPTVEIVSKPARKPPAKKAAAKPAAKAELVSKPKASAKASKGDLSVPTKPARKRAAKASTNSDITS.

A helical membrane pass occupies residues leucine 2–glycine 22. The interval isoleucine 130 to serine 190 is disordered. Basic residues predominate over residues proline 134–alanine 144. Residues alanine 145–alanine 163 are compositionally biased toward low complexity.

It belongs to the TatB family. In terms of assembly, the Tat system comprises two distinct complexes: a TatABC complex, containing multiple copies of TatA, TatB and TatC subunits, and a separate TatA complex, containing only TatA subunits. Substrates initially bind to the TatABC complex, which probably triggers association of the separate TatA complex to form the active translocon.

The protein resides in the cell inner membrane. In terms of biological role, part of the twin-arginine translocation (Tat) system that transports large folded proteins containing a characteristic twin-arginine motif in their signal peptide across membranes. Together with TatC, TatB is part of a receptor directly interacting with Tat signal peptides. TatB may form an oligomeric binding site that transiently accommodates folded Tat precursor proteins before their translocation. The protein is Sec-independent protein translocase protein TatB of Caulobacter sp. (strain K31).